A 416-amino-acid polypeptide reads, in one-letter code: Tryptophan synthase beta chain (416 aa).

Residues 1–23 are disordered; that stretch reads MTSTLPSQPKDMELANSSRPSVH. Lys-109 carries the post-translational modification N6-(pyridoxal phosphate)lysine.

The protein belongs to the TrpB family. In terms of assembly, tetramer of two alpha and two beta chains. It depends on pyridoxal 5'-phosphate as a cofactor.

It carries out the reaction (1S,2R)-1-C-(indol-3-yl)glycerol 3-phosphate + L-serine = D-glyceraldehyde 3-phosphate + L-tryptophan + H2O. It functions in the pathway amino-acid biosynthesis; L-tryptophan biosynthesis; L-tryptophan from chorismate: step 5/5. In terms of biological role, the beta subunit is responsible for the synthesis of L-tryptophan from indole and L-serine. The polypeptide is Tryptophan synthase beta chain (Prochlorococcus marinus (strain MIT 9211)).